The chain runs to 297 residues: UDP-N-acetylenolpyruvoylglucosamine reductase (297 aa).

One can recognise an FAD-binding PCMH-type domain in the interval 18 to 184 (QVGGPAEWYL…LSARLRLAPG (167 aa)). The active site involves Arg-163. Ser-214 (proton donor) is an active-site residue. The active site involves Glu-285.

FAD serves as cofactor.

It is found in the cytoplasm. It catalyses the reaction UDP-N-acetyl-alpha-D-muramate + NADP(+) = UDP-N-acetyl-3-O-(1-carboxyvinyl)-alpha-D-glucosamine + NADPH + H(+). Its pathway is cell wall biogenesis; peptidoglycan biosynthesis. In terms of biological role, cell wall formation. The sequence is that of UDP-N-acetylenolpyruvoylglucosamine reductase from Gloeobacter violaceus (strain ATCC 29082 / PCC 7421).